The primary structure comprises 579 residues: Mitochondrial distribution and morphology protein 36 (579 aa).

The segment at 1-27 (MDENGTVKPGYELKGLNSGNSRSNMDK) is disordered. S42 carries the post-translational modification Phosphoserine. Disordered regions lie at residues 378–401 (TPIN…GRRL) and 446–518 (DNKH…ESQS). The segment covering 379 to 390 (PINSSDSDNLSN) has biased composition (polar residues). The segment covering 446–463 (DNKHSTKDTDSNIRRNEH) has biased composition (basic and acidic residues). Residues 495–518 (PSQSSSRMSTLPLSPSSSLLESQS) show a composition bias toward low complexity.

Functionally, involved in mitochondrial distribution and morphology. The chain is Mitochondrial distribution and morphology protein 36 (MDM36) from Saccharomyces cerevisiae (strain ATCC 204508 / S288c) (Baker's yeast).